An 895-amino-acid polypeptide reads, in one-letter code: uncharacterized protein (895 aa).

Positions 257 to 283 (KSHKYPPGPPDNSSSNTSGQQNTSNTS) are disordered. Low complexity predominate over residues 268 to 283 (NSSSNTSGQQNTSNTS).

This is an uncharacterized protein from Acanthamoeba polyphaga mimivirus (APMV).